A 90-amino-acid chain; its full sequence is Co-chaperonin GroES (90 aa).

It belongs to the GroES chaperonin family. As to quaternary structure, heptamer of 7 subunits arranged in a ring. Interacts with the chaperonin GroEL.

Its subcellular location is the cytoplasm. Functionally, together with the chaperonin GroEL, plays an essential role in assisting protein folding. The GroEL-GroES system forms a nano-cage that allows encapsulation of the non-native substrate proteins and provides a physical environment optimized to promote and accelerate protein folding. GroES binds to the apical surface of the GroEL ring, thereby capping the opening of the GroEL channel. This is Co-chaperonin GroES from Thermosipho africanus (strain TCF52B).